The primary structure comprises 282 residues: Phosphatidylglycerol--prolipoprotein diacylglyceryl transferase (282 aa).

4 helical membrane passes run 23 to 43, 71 to 91, 106 to 126, and 132 to 152; these read IGPL…LLGW, FIVW…IFFY, IWNG…AMII, and GIPI…GLFF. Arginine 154 lines the a 1,2-diacyl-sn-glycero-3-phospho-(1'-sn-glycerol) pocket. Helical transmembrane passes span 189-209, 217-237, and 252-272; these read LYEA…LVYG, GFIT…VEFF, and WLTM…WAML.

The protein belongs to the Lgt family.

The protein resides in the cell inner membrane. It carries out the reaction L-cysteinyl-[prolipoprotein] + a 1,2-diacyl-sn-glycero-3-phospho-(1'-sn-glycerol) = an S-1,2-diacyl-sn-glyceryl-L-cysteinyl-[prolipoprotein] + sn-glycerol 1-phosphate + H(+). The protein operates within protein modification; lipoprotein biosynthesis (diacylglyceryl transfer). Functionally, catalyzes the transfer of the diacylglyceryl group from phosphatidylglycerol to the sulfhydryl group of the N-terminal cysteine of a prolipoprotein, the first step in the formation of mature lipoproteins. In Rhizobium leguminosarum bv. trifolii (strain WSM2304), this protein is Phosphatidylglycerol--prolipoprotein diacylglyceryl transferase.